The chain runs to 71 residues: MGSFSLLHWLVVLVIVLLVFGTKRLANGAKDIGSAIKEFKKSLHEDDKPTDQLGSTSQSTASGPQQDHGKH.

A helical transmembrane segment spans residues 1–21 (MGSFSLLHWLVVLVIVLLVFG). The disordered stretch occupies residues 43 to 71 (LHEDDKPTDQLGSTSQSTASGPQQDHGKH). Positions 52–65 (QLGSTSQSTASGPQ) are enriched in polar residues.

The protein belongs to the TatA/E family. As to quaternary structure, the Tat system comprises two distinct complexes: a TatABC complex, containing multiple copies of TatA, TatB and TatC subunits, and a separate TatA complex, containing only TatA subunits. Substrates initially bind to the TatABC complex, which probably triggers association of the separate TatA complex to form the active translocon.

The protein resides in the cell inner membrane. Part of the twin-arginine translocation (Tat) system that transports large folded proteins containing a characteristic twin-arginine motif in their signal peptide across membranes. TatA could form the protein-conducting channel of the Tat system. The sequence is that of Sec-independent protein translocase protein TatA from Xylella fastidiosa (strain M12).